Here is a 154-residue protein sequence, read N- to C-terminus: UPF0178 protein GDI0551/Gdia_1457 (154 aa).

This sequence belongs to the UPF0178 family.

This Gluconacetobacter diazotrophicus (strain ATCC 49037 / DSM 5601 / CCUG 37298 / CIP 103539 / LMG 7603 / PAl5) protein is UPF0178 protein GDI0551/Gdia_1457.